Consider the following 43-residue polypeptide: Protein PsbN (43 aa).

A helical membrane pass occupies residues 5-27 (NLVAIFVSCLLVSLTGYALYTSF).

Belongs to the PsbN family.

Its subcellular location is the plastid. It is found in the chloroplast thylakoid membrane. May play a role in photosystem I and II biogenesis. This chain is Protein PsbN, found in Ephedra sinica (Chinese ephedra).